A 154-amino-acid chain; its full sequence is Ecotin-like protein 2 (154 aa).

This sequence belongs to the protease inhibitor I11 (ecotin) family.

This is Ecotin-like protein 2 from Trypanosoma brucei brucei (strain 927/4 GUTat10.1).